The chain runs to 459 residues: GTPase Der (459 aa).

EngA-type G domains lie at proline 4–alanine 169 and isoleucine 179–arginine 355. GTP contacts are provided by residues glycine 10–serine 17, aspartate 57–leucine 61, asparagine 120–glutamate 123, glycine 185–serine 192, aspartate 232–isoleucine 236, and asparagine 297–aspartate 300. The KH-like domain occupies lysine 356–serine 441.

The protein belongs to the TRAFAC class TrmE-Era-EngA-EngB-Septin-like GTPase superfamily. EngA (Der) GTPase family. In terms of assembly, associates with the 50S ribosomal subunit.

GTPase that plays an essential role in the late steps of ribosome biogenesis. In Synechococcus sp. (strain JA-3-3Ab) (Cyanobacteria bacterium Yellowstone A-Prime), this protein is GTPase Der.